Consider the following 31-residue polypeptide: Photosystem II reaction center protein M (31 aa).

The helical transmembrane segment at 5 to 25 (ILALMATALFIIIPTAFLIIL) threads the bilayer.

The protein belongs to the PsbM family. In terms of assembly, PSII is composed of 1 copy each of membrane proteins PsbA, PsbB, PsbC, PsbD, PsbE, PsbF, PsbH, PsbI, PsbJ, PsbK, PsbL, PsbM, PsbT, PsbX, PsbY, PsbZ, Psb30/Ycf12, at least 3 peripheral proteins of the oxygen-evolving complex and a large number of cofactors. It forms dimeric complexes.

The protein localises to the plastid. The protein resides in the chloroplast thylakoid membrane. In terms of biological role, one of the components of the core complex of photosystem II (PSII). PSII is a light-driven water:plastoquinone oxidoreductase that uses light energy to abstract electrons from H(2)O, generating O(2) and a proton gradient subsequently used for ATP formation. It consists of a core antenna complex that captures photons, and an electron transfer chain that converts photonic excitation into a charge separation. This subunit is found at the monomer-monomer interface. This chain is Photosystem II reaction center protein M, found in Mesostigma viride (Green alga).